The following is a 251-amino-acid chain: Tritrans,polycis-undecaprenyl-diphosphate synthase (geranylgeranyl-diphosphate specific) (251 aa).

Residue Asp29 is part of the active site. Asp29 contributes to the Mg(2+) binding site. Substrate is bound by residues 30–33, Phe34, His46, and 74–76; these read GNRR and STE. The active-site Proton acceptor is Asn77. Residues Phe78, Arg80, Arg200, and 206 to 208 contribute to the substrate site; that span reads RLS.

It belongs to the UPP synthase family. As to quaternary structure, homodimer. The cofactor is Mg(2+).

It catalyses the reaction geranylgeranyl diphosphate + 7 isopentenyl diphosphate = tri-trans,hepta-cis-undecaprenyl diphosphate + 7 diphosphate. In terms of biological role, catalyzes the sequential condensation of isopentenyl diphosphate (IPP) with geranylgeranyl diphosphate (GGPP) to yield (2Z,6Z,10Z,14Z,18Z,22Z,26Z,30E,34E,38E)-undecaprenyl diphosphate (tritrans,heptacis-UPP). It is probably the precursor of glycosyl carrier lipids. The chain is Tritrans,polycis-undecaprenyl-diphosphate synthase (geranylgeranyl-diphosphate specific) from Archaeoglobus fulgidus (strain ATCC 49558 / DSM 4304 / JCM 9628 / NBRC 100126 / VC-16).